The sequence spans 237 residues: Probable septum site-determining protein MinC (237 aa).

The protein belongs to the MinC family. Interacts with MinD and FtsZ.

Cell division inhibitor that blocks the formation of polar Z ring septums. Rapidly oscillates between the poles of the cell to destabilize FtsZ filaments that have formed before they mature into polar Z rings. Prevents FtsZ polymerization. This Buchnera aphidicola subsp. Acyrthosiphon pisum (strain 5A) protein is Probable septum site-determining protein MinC.